Here is a 269-residue protein sequence, read N- to C-terminus: Formamidopyrimidine-DNA glycosylase (269 aa).

The active-site Schiff-base intermediate with DNA is proline 2. Glutamate 3 acts as the Proton donor in catalysis. Lysine 58 serves as the catalytic Proton donor; for beta-elimination activity. The DNA site is built by histidine 91, arginine 110, and lysine 150. The segment at 235–269 (SVYGCKNKKCYRCKGIIIKFVQNQRSTFYCKKCQT) adopts an FPG-type zinc-finger fold. Arginine 259 functions as the Proton donor; for delta-elimination activity in the catalytic mechanism.

It belongs to the FPG family. As to quaternary structure, monomer. Zn(2+) is required as a cofactor.

The catalysed reaction is Hydrolysis of DNA containing ring-opened 7-methylguanine residues, releasing 2,6-diamino-4-hydroxy-5-(N-methyl)formamidopyrimidine.. It carries out the reaction 2'-deoxyribonucleotide-(2'-deoxyribose 5'-phosphate)-2'-deoxyribonucleotide-DNA = a 3'-end 2'-deoxyribonucleotide-(2,3-dehydro-2,3-deoxyribose 5'-phosphate)-DNA + a 5'-end 5'-phospho-2'-deoxyribonucleoside-DNA + H(+). Involved in base excision repair of DNA damaged by oxidation or by mutagenic agents. Acts as a DNA glycosylase that recognizes and removes damaged bases. Has a preference for oxidized purines, such as 7,8-dihydro-8-oxoguanine (8-oxoG). Has AP (apurinic/apyrimidinic) lyase activity and introduces nicks in the DNA strand. Cleaves the DNA backbone by beta-delta elimination to generate a single-strand break at the site of the removed base with both 3'- and 5'-phosphates. The protein is Formamidopyrimidine-DNA glycosylase of Vesicomyosocius okutanii subsp. Calyptogena okutanii (strain HA).